The sequence spans 119 residues: NADH-quinone oxidoreductase subunit A (119 aa).

3 helical membrane-spanning segments follow: residues 7–27 (FPVL…MTIG), 63–83 (LIAI…PWGV), and 88–108 (IGWP…VGFV).

It belongs to the complex I subunit 3 family. In terms of assembly, NDH-1 is composed of 14 different subunits. Subunits NuoA, H, J, K, L, M, N constitute the membrane sector of the complex.

It localises to the cell inner membrane. The catalysed reaction is a quinone + NADH + 5 H(+)(in) = a quinol + NAD(+) + 4 H(+)(out). Its function is as follows. NDH-1 shuttles electrons from NADH, via FMN and iron-sulfur (Fe-S) centers, to quinones in the respiratory chain. The immediate electron acceptor for the enzyme in this species is believed to be ubiquinone. Couples the redox reaction to proton translocation (for every two electrons transferred, four hydrogen ions are translocated across the cytoplasmic membrane), and thus conserves the redox energy in a proton gradient. The polypeptide is NADH-quinone oxidoreductase subunit A (Ralstonia pickettii (strain 12J)).